A 137-amino-acid chain; its full sequence is Probable 4-amino-4-deoxy-L-arabinose-phosphoundecaprenol flippase subunit ArnF (137 aa).

Topologically, residues 1 to 5 (MSRAR) are cytoplasmic. The chain crosses the membrane as a helical span at residues 6 to 26 (GFAFALGSVALVSGAQLGMRW). Residues 27 to 49 (SMTRLPAPDQWLPALSAGSVDLA) lie on the Periplasmic side of the membrane. The chain crosses the membrane as a helical span at residues 50 to 70 (ALAVVAAAIAAYALSMLCWLL). At 71–80 (ALRDLPLGRA) the chain is on the cytoplasmic side. The helical transmembrane segment at 81–101 (YSLLSISYALVYLLAASLPLF) threads the bilayer. Residue Asn-102 is a topological domain, periplasmic. A helical membrane pass occupies residues 103–123 (EPFTLSKTLGVALVILGVITI). At 124–137 (NSRSAPATSPRNTP) the chain is on the cytoplasmic side.

Belongs to the ArnF family. As to quaternary structure, heterodimer of ArnE and ArnF.

It is found in the cell inner membrane. Its pathway is bacterial outer membrane biogenesis; lipopolysaccharide biosynthesis. Its function is as follows. Translocates 4-amino-4-deoxy-L-arabinose-phosphoundecaprenol (alpha-L-Ara4N-phosphoundecaprenol) from the cytoplasmic to the periplasmic side of the inner membrane. This Pseudomonas fluorescens (strain ATCC BAA-477 / NRRL B-23932 / Pf-5) protein is Probable 4-amino-4-deoxy-L-arabinose-phosphoundecaprenol flippase subunit ArnF.